We begin with the raw amino-acid sequence, 386 residues long: Phosphoglycerate kinase (386 aa).

Substrate contacts are provided by residues 21 to 23 (DLN), Arg-36, 59 to 62 (HLGR), Arg-113, and Arg-146. Residues Lys-197, Glu-314, and 340–343 (GGDT) each bind ATP.

Belongs to the phosphoglycerate kinase family. As to quaternary structure, monomer.

The protein resides in the cytoplasm. The enzyme catalyses (2R)-3-phosphoglycerate + ATP = (2R)-3-phospho-glyceroyl phosphate + ADP. The protein operates within carbohydrate degradation; glycolysis; pyruvate from D-glyceraldehyde 3-phosphate: step 2/5. The protein is Phosphoglycerate kinase of Ectopseudomonas mendocina (strain ymp) (Pseudomonas mendocina).